The primary structure comprises 203 residues: MPQTPSTRWCPTPEQLMILEEMYRSGVRTPNAAEIQQITAHLAYYGRIEGKNVFYWFQNHKARERQRLRRRLCARHQQQPSPPSSTVPPAPTAAAAGAVVQVHPAVMQLHHHHHHHHPYAAAAAAQSHHLQQQQQQQAEWPAAVDYCSTASASASATAADMAIPPCCRPLKTLELFPTKSTSGGLKEDCCSSSKSSSCSTSTN.

A DNA-binding region (homeobox; WUS-type) is located at residues 4–68 (TPSTRWCPTP…NHKARERQRL (65 aa)). Disordered regions lie at residues 73 to 95 (CARHQQQPSPPSSTVPPAPTAAA), 109 to 135 (LHHHHHHHHPYAAAAAAQSHHLQQQQQ), and 180 to 203 (STSGGLKEDCCSSSKSSSCSTSTN). Residues 80–91 (PSPPSSTVPPAP) are compositionally biased toward pro residues. The segment covering 109 to 118 (LHHHHHHHHP) has biased composition (basic residues). Low complexity-rich tracts occupy residues 119 to 135 (YAAAAAAQSHHLQQQQQ) and 190 to 203 (CSSSKSSSCSTSTN).

The protein belongs to the WUS homeobox family.

Its subcellular location is the nucleus. Its function is as follows. Transcription factor which may be involved in developmental processes. This chain is WUSCHEL-related homeobox 3 (WOX3), found in Oryza sativa subsp. indica (Rice).